A 142-amino-acid chain; its full sequence is uncharacterized protein (142 aa).

Residues Asn29 and Asn67 are each glycosylated (N-linked (GlcNAc...) asparagine; by host). The chain crosses the membrane as a helical span at residues 88-108 (VFYLGYPVIFIIGVTYFSIIA).

The protein resides in the membrane. This is an uncharacterized protein from Acanthamoeba polyphaga mimivirus (APMV).